Consider the following 869-residue polypeptide: Synaptonemal complex protein ZEP1 (869 aa).

3 coiled-coil regions span residues 64 to 298 (TDLE…SGFT), 330 to 614 (HEEK…SERY), and 641 to 713 (RAYH…WKVM). Residues 841-869 (GSHPHPANIGELFSEGSLNPYAEDPYAFG) are disordered.

As to quaternary structure, interacts with CRC1. As to expression, highly expressed in panicles.

It localises to the nucleus. It is found in the chromosome. Its function is as follows. Required for chromosome synapsis and regulates crossover frequency during meiosis. Acts as a transverse filament protein and constitutes the central element of the synaptonemal complex. The polypeptide is Synaptonemal complex protein ZEP1 (ZEP1) (Oryza sativa subsp. japonica (Rice)).